A 653-amino-acid polypeptide reads, in one-letter code: MWTGGRRPGRLRRAASAADMEKLRLRSAWVPSCLGQSRNLQGRRARSSPSLWDSSLQEQKGELRKRLSYTTHRLEKLENEFDSTRHFLEIELRRAQEELEKVTEKLRRIQSNYMALQRINQELEDKLFRMGQHYEEEKRALSHEIVALNSHLLEAKVTIDKLSEDNELYRKDCSLAAQLLQCSQAYGRGRKMAELPAEFQERMNLHAEKPGCSLPAPPRRPAYADSVPPCVLAKVLEKPDPGSLSSHLSEASAQDLGFPEGLEKPGSRPPYKGDIYCSDTALYCPEARHQDRRPSVEGPGSDVGFLQAQNSTDSTAEEEEEEEEDTEAGAAAYPASYRHEAFGGYAASLPTSSSYSSFSAASEEKEHAQASTLTASQQAIYLNSRDELFGRKPAAAYGSSPRYAAAAAAVAAPLEAAMAPGFPRTVSPFPGEPFRFPLSPGPQPALMPPNLWNLRAKPGSARLVAGAGRGQWRPLSVDDIGAYPFPAAAAAPAPSLASPGGGFNDRYFGARGGPGDNAEGRASPLYASYKADSFSEGDDLSQGHLVEPRYLRAAGDLSLSPGHSADPLPSYAASEGDRERLGVQLLGASGSPEPELSLRSSRDSLEPSSMEASPEMHPGARLSPQPAFPRAGSSGLSRKDSLTKAQLYGTLLN.

A Phosphotyrosine modification is found at tyrosine 186. Positions 241 to 271 (PGSLSSHLSEASAQDLGFPEGLEKPGSRPPY) are disordered. Residues 243–252 (SLSSHLSEAS) are compositionally biased toward polar residues. A phosphoserine mark is found at serine 249, serine 278, serine 295, and serine 314. The disordered stretch occupies residues 288–329 (RHQDRRPSVEGPGSDVGFLQAQNSTDSTAEEEEEEEEDTEAG). Acidic residues predominate over residues 315–327 (TAEEEEEEEEDTE). A phosphoserine mark is found at serine 400 and serine 427. Arginine 435 carries the asymmetric dimethylarginine modification. Phosphoserine is present on residues serine 523, serine 533, serine 535, serine 558, serine 560, serine 564, serine 613, and serine 623. A disordered region spans residues 587-653 (GASGSPEPEL…KAQLYGTLLN (67 aa)).

As to quaternary structure, interacts with DLG4 and DLGAP1 and forms a ternary complex.

It localises to the cytoplasm. Its subcellular location is the membrane. Its function is as follows. May sustain the structure of the postsynaptic density (PSD). This Ovis aries (Sheep) protein is Brain-enriched guanylate kinase-associated protein (BEGAIN).